The sequence spans 251 residues: NAD kinase (251 aa).

Aspartate 51 functions as the Proton acceptor in the catalytic mechanism. Residues 51–52, lysine 56, 113–114, lysine 124, histidine 140, aspartate 142, 153–158, and alanine 177 contribute to the NAD(+) site; these read DG, NE, and TGYSLS.

It belongs to the NAD kinase family. A divalent metal cation serves as cofactor.

The protein resides in the cytoplasm. The enzyme catalyses NAD(+) + ATP = ADP + NADP(+) + H(+). Functionally, involved in the regulation of the intracellular balance of NAD and NADP, and is a key enzyme in the biosynthesis of NADP. Catalyzes specifically the phosphorylation on 2'-hydroxyl of the adenosine moiety of NAD to yield NADP. This is NAD kinase from Thermosipho melanesiensis (strain DSM 12029 / CIP 104789 / BI429).